The following is a 378-amino-acid chain: S-adenosylmethionine synthase (378 aa).

His15 contacts ATP. Asp17 contacts Mg(2+). Position 43 (Glu43) interacts with K(+). L-methionine-binding residues include Glu56 and Gln99. Positions Gln99–Arg109 are flexible loop. Residues Asp164 to Lys166, Arg230 to Phe231, Asp239, Arg245 to Lys246, Ala262, and Lys266 contribute to the ATP site. Residue Asp239 participates in L-methionine binding. Lys270 contributes to the L-methionine binding site.

This sequence belongs to the AdoMet synthase family. Homotetramer; dimer of dimers. Mg(2+) serves as cofactor. It depends on K(+) as a cofactor.

It localises to the cytoplasm. It carries out the reaction L-methionine + ATP + H2O = S-adenosyl-L-methionine + phosphate + diphosphate. It participates in amino-acid biosynthesis; S-adenosyl-L-methionine biosynthesis; S-adenosyl-L-methionine from L-methionine: step 1/1. In terms of biological role, catalyzes the formation of S-adenosylmethionine (AdoMet) from methionine and ATP. The overall synthetic reaction is composed of two sequential steps, AdoMet formation and the subsequent tripolyphosphate hydrolysis which occurs prior to release of AdoMet from the enzyme. This is S-adenosylmethionine synthase from Buchnera aphidicola subsp. Acyrthosiphon pisum (strain 5A).